The chain runs to 738 residues: Photosystem I P700 chlorophyll a apoprotein A2 (738 aa).

8 helical membrane-spanning segments follow: residues 46–69 (LFST…FHIA), 135–158 (LYQG…LHLQ), 175–199 (LNHH…HVAI), 273–291 (IAHH…GHMY), 333–356 (LHFQ…QHMY), 372–398 (AALY…IFFI), 420–442 (AIIS…LYVH), and 521–539 (FLVH…LILV). [4Fe-4S] cluster-binding residues include Cys563 and Cys572. The next 2 membrane-spanning stretches (helical) occupy residues 579 to 600 (AFYL…YWHW) and 647 to 669 (LAVW…MFLI). His658, Met666, and Tyr674 together coordinate chlorophyll a. Trp675 provides a ligand contact to phylloquinone. A helical membrane pass occupies residues 711–731 (VVGLAHFTVGYVLTYGAFLIA).

Belongs to the PsaA/PsaB family. As to quaternary structure, the PsaA/B heterodimer binds the P700 chlorophyll special pair and subsequent electron acceptors. PSI consists of a core antenna complex that captures photons, and an electron transfer chain that converts photonic excitation into a charge separation. The cyanobacterial PSI reaction center is composed of one copy each of PsaA,B,C,D,E,F,I,J,K,L,M and X, and forms trimeric complexes. PSI electron transfer chain: 5 chlorophyll a, 1 chlorophyll a', 2 phylloquinones and 3 4Fe-4S clusters. PSI core antenna: 90 chlorophyll a, 22 carotenoids, 3 phospholipids and 1 galactolipid. P700 is a chlorophyll a/chlorophyll a' dimer, A0 is one or more chlorophyll a, A1 is one or both phylloquinones and FX is a shared 4Fe-4S iron-sulfur center. is required as a cofactor.

The protein resides in the cellular thylakoid membrane. It catalyses the reaction reduced [plastocyanin] + hnu + oxidized [2Fe-2S]-[ferredoxin] = oxidized [plastocyanin] + reduced [2Fe-2S]-[ferredoxin]. Its function is as follows. PsaA and PsaB bind P700, the primary electron donor of photosystem I (PSI), as well as the electron acceptors A0, A1 and FX. PSI is a plastocyanin/cytochrome c6-ferredoxin oxidoreductase, converting photonic excitation into a charge separation, which transfers an electron from the donor P700 chlorophyll pair to the spectroscopically characterized acceptors A0, A1, FX, FA and FB in turn. Oxidized P700 is reduced on the lumenal side of the thylakoid membrane by plastocyanin or cytochrome c6. The sequence is that of Photosystem I P700 chlorophyll a apoprotein A2 from Synechococcus sp. (strain CC9311).